Consider the following 141-residue polypeptide: Nucleoside diphosphate kinase (141 aa).

Residues Lys11, Phe59, Arg87, Thr93, Arg104, and Asn114 each contribute to the ATP site. The active-site Pros-phosphohistidine intermediate is the His117.

The protein belongs to the NDK family. As to quaternary structure, homotetramer. It depends on Mg(2+) as a cofactor.

It localises to the cytoplasm. It catalyses the reaction a 2'-deoxyribonucleoside 5'-diphosphate + ATP = a 2'-deoxyribonucleoside 5'-triphosphate + ADP. The enzyme catalyses a ribonucleoside 5'-diphosphate + ATP = a ribonucleoside 5'-triphosphate + ADP. In terms of biological role, major role in the synthesis of nucleoside triphosphates other than ATP. The ATP gamma phosphate is transferred to the NDP beta phosphate via a ping-pong mechanism, using a phosphorylated active-site intermediate. The polypeptide is Nucleoside diphosphate kinase (Nitrosomonas eutropha (strain DSM 101675 / C91 / Nm57)).